A 100-amino-acid polypeptide reads, in one-letter code: Apolipoprotein C-II (100 aa).

The signal sequence occupies residues 1–22 (MDSRFLLALFLVLLVLGCEVQA). The tract at residues 66–74 (SVDEKLRDM) is lipid binding. The lipoprotein lipase cofactor stretch occupies residues 78-100 (SSAAMTTYAIIFTDQILTLLKGE).

This sequence belongs to the apolipoprotein C2 family. In terms of processing, proapolipoprotein C-II is synthesized as a sialic acid containing glycoprotein which is subsequently desialylated prior to its proteolytic processing. Proapolipoprotein C-II, the major form found in plasma undergoes proteolytic cleavage of its N-terminal hexapeptide to generate the mature form apolipoprotein C-II, which occurs as the minor form in plasma.

Its subcellular location is the secreted. Component of chylomicrons, very low-density lipoproteins (VLDL), low-density lipoproteins (LDL), and high-density lipoproteins (HDL) in plasma. Plays an important role in lipoprotein metabolism as an activator of lipoprotein lipase. The polypeptide is Apolipoprotein C-II (APOC2) (Myodes glareolus (Bank vole)).